A 629-amino-acid chain; its full sequence is Protein fem-1 homolog B (629 aa).

ANK repeat units lie at residues 47 to 77 (QRSTPLIIAARNGHSKVVRLLLEHYKVDVQQ), 89 to 118 (DGATALWCAAGAGHYEVVKLLVSHEANVNH), 122 to 151 (TNSTPLRAACFDGRLDIVRFLVENNANISI), 155 to 184 (YDNTCLMIAAYKGHSDVVHYLLRQHADPNA), 188 to 217 (CGATALHFAAEAGHLDIVRELVKWKAAMVV), and 220 to 250 (HGMTPLKVAAESCKADVVELLLAHSDCDAKS). The stretch at 346 to 379 (SHPIIYRGAVYADNMQFEQCIKLWLHALQLRQKG) is one TPR repeat. ANK repeat units follow at residues 485–529 (EGGS…NVNA) and 533–570 (MGNSPLHVIVQYNRPISDFLTLHAIIISLVEAGAHTDM).

Belongs to the fem-1 family. In terms of assembly, component of a CRL2 E3 ubiquitin-protein ligase complex, also named ECS (Elongin BC-CUL2/5-SOCS-box protein) complex.

It localises to the cytoplasm. The protein resides in the nucleus. It functions in the pathway protein modification; protein ubiquitination. Functionally, substrate-recognition component of a Cul2-RING (CRL2) E3 ubiquitin-protein ligase complex of the DesCEND (destruction via C-end degrons) pathway, which recognizes a C-degron located at the extreme C terminus of target proteins, leading to their ubiquitination and degradation. The C-degron recognized by the DesCEND pathway is usually a motif of less than ten residues and can be present in full-length proteins, truncated proteins or proteolytically cleaved forms. The CRL2(FEM1B) complex specifically recognizes proteins ending with -Gly-Leu-Asp-Arg, leading to their ubiquitination and degradation. The polypeptide is Protein fem-1 homolog B (Xenopus laevis (African clawed frog)).